Reading from the N-terminus, the 87-residue chain is MDKAKKQELMAKHARHEGDTGSPEVQIALLTERINHLNSHLKEHKKDHHSRRGLLMMVGKRRGLLNYLMREDIERYRAIIKELGLRK.

Positions 1 to 19 (MDKAKKQELMAKHARHEGD) are enriched in basic and acidic residues. A disordered region spans residues 1–23 (MDKAKKQELMAKHARHEGDTGSP).

This sequence belongs to the universal ribosomal protein uS15 family. Part of the 30S ribosomal subunit. Forms a bridge to the 50S subunit in the 70S ribosome, contacting the 23S rRNA.

Its function is as follows. One of the primary rRNA binding proteins, it binds directly to 16S rRNA where it helps nucleate assembly of the platform of the 30S subunit by binding and bridging several RNA helices of the 16S rRNA. Functionally, forms an intersubunit bridge (bridge B4) with the 23S rRNA of the 50S subunit in the ribosome. The chain is Small ribosomal subunit protein uS15 from Clostridium botulinum (strain Loch Maree / Type A3).